Reading from the N-terminus, the 264-residue chain is S-methyl-5'-thioadenosine phosphorylase (264 aa).

Phosphate-binding positions include S14 and 55–56 (RH). Residue M180 participates in substrate binding. T181 is a binding site for phosphate. Residue 204–206 (DVD) coordinates substrate.

Belongs to the PNP/MTAP phosphorylase family. MTAP subfamily. Homodimer.

It carries out the reaction S-methyl-5'-thioadenosine + phosphate = 5-(methylsulfanyl)-alpha-D-ribose 1-phosphate + adenine. The protein operates within amino-acid biosynthesis; L-methionine biosynthesis via salvage pathway; S-methyl-5-thio-alpha-D-ribose 1-phosphate from S-methyl-5'-thioadenosine (phosphorylase route): step 1/1. Its activity is regulated as follows. Not inhibited by adenosine, potently inhibited by MT-DADMe-immucillin A. Functionally, catalyzes the reversible phosphorylation of S-methyl-5'-thioadenosine (MTA) to adenine and 5-methylthioribose-1-phosphate. Involved in the breakdown of MTA, a major by-product of polyamine biosynthesis. Responsible for the first step in the methionine salvage pathway after MTA has been generated from S-adenosylmethionine. Prefers MTA, with 2% activity on adenosine, 0.8% activity on S-adenosyl-L-homocysteine and no activity on other tested nucleosides. The protein is S-methyl-5'-thioadenosine phosphorylase of Mycobacterium tuberculosis (strain ATCC 25618 / H37Rv).